We begin with the raw amino-acid sequence, 95 residues long: Small ribosomal subunit protein bS20 (95 aa).

Belongs to the bacterial ribosomal protein bS20 family.

In terms of biological role, binds directly to 16S ribosomal RNA. The protein is Small ribosomal subunit protein bS20 of Fervidobacterium nodosum (strain ATCC 35602 / DSM 5306 / Rt17-B1).